A 347-amino-acid polypeptide reads, in one-letter code: Gamma-glutamyl hydrolase B (347 aa).

The signal sequence occupies residues 1–22 (MIKLFSLFIYLYLISNLKLINT). Residues 23 to 314 (INNTPVIGIL…THVEQIYIFN (292 aa)) enclose the Gamma-glutamyl hydrolase domain. The Nucleophile role is filled by Cys-128. N-linked (GlcNAc...) asparagine glycosylation is found at Asn-152, Asn-158, and Asn-201. The Proton donor role is filled by His-240. Asn-273, Asn-314, and Asn-318 each carry an N-linked (GlcNAc...) asparagine glycan.

Belongs to the peptidase C26 family.

Its subcellular location is the secreted. The protein localises to the extracellular space. It catalyses the reaction (6S)-5,6,7,8-tetrahydrofolyl-(gamma-L-Glu)(n) + (n-1) H2O = (6S)-5,6,7,8-tetrahydrofolate + (n-1) L-glutamate. This chain is Gamma-glutamyl hydrolase B (gghB), found in Dictyostelium discoideum (Social amoeba).